Here is a 451-residue protein sequence, read N- to C-terminus: Bifunctional protein GlmU (451 aa).

The tract at residues 1 to 229 is pyrophosphorylase; it reads MQRHAIVLAA…FEEIMGVNDR (229 aa). UDP-N-acetyl-alpha-D-glucosamine-binding positions include 8 to 11, K22, Q72, and 77 to 78; these read LAAG and GT. Residue D102 coordinates Mg(2+). Positions 139, 154, and 227 each coordinate UDP-N-acetyl-alpha-D-glucosamine. Mg(2+) is bound at residue N227. The segment at 230–250 is linker; the sequence is VMLSEAEKAFRKRINEQHMKN. The tract at residues 251-451 is N-acetyltransferase; that stretch reads GVTIIDPVTT…QTTKEGYLKK (201 aa). R332 and K350 together coordinate UDP-N-acetyl-alpha-D-glucosamine. The active-site Proton acceptor is H362. UDP-N-acetyl-alpha-D-glucosamine is bound by residues Y365 and N376. Residues 385–386, A422, and R439 contribute to the acetyl-CoA site; that span reads NY.

It in the N-terminal section; belongs to the N-acetylglucosamine-1-phosphate uridyltransferase family. In the C-terminal section; belongs to the transferase hexapeptide repeat family. Homotrimer. Requires Mg(2+) as cofactor.

It is found in the cytoplasm. It carries out the reaction alpha-D-glucosamine 1-phosphate + acetyl-CoA = N-acetyl-alpha-D-glucosamine 1-phosphate + CoA + H(+). The enzyme catalyses N-acetyl-alpha-D-glucosamine 1-phosphate + UTP + H(+) = UDP-N-acetyl-alpha-D-glucosamine + diphosphate. The protein operates within nucleotide-sugar biosynthesis; UDP-N-acetyl-alpha-D-glucosamine biosynthesis; N-acetyl-alpha-D-glucosamine 1-phosphate from alpha-D-glucosamine 6-phosphate (route II): step 2/2. It participates in nucleotide-sugar biosynthesis; UDP-N-acetyl-alpha-D-glucosamine biosynthesis; UDP-N-acetyl-alpha-D-glucosamine from N-acetyl-alpha-D-glucosamine 1-phosphate: step 1/1. It functions in the pathway bacterial outer membrane biogenesis; LPS lipid A biosynthesis. Catalyzes the last two sequential reactions in the de novo biosynthetic pathway for UDP-N-acetylglucosamine (UDP-GlcNAc). The C-terminal domain catalyzes the transfer of acetyl group from acetyl coenzyme A to glucosamine-1-phosphate (GlcN-1-P) to produce N-acetylglucosamine-1-phosphate (GlcNAc-1-P), which is converted into UDP-GlcNAc by the transfer of uridine 5-monophosphate (from uridine 5-triphosphate), a reaction catalyzed by the N-terminal domain. In Staphylococcus saprophyticus subsp. saprophyticus (strain ATCC 15305 / DSM 20229 / NCIMB 8711 / NCTC 7292 / S-41), this protein is Bifunctional protein GlmU.